The chain runs to 104 residues: ATP synthase subunit c (104 aa).

Helical transmembrane passes span Ser-31–Gly-51 and Met-75–Ile-95.

The protein belongs to the ATPase C chain family. As to quaternary structure, F-type ATPases have 2 components, F(1) - the catalytic core - and F(0) - the membrane proton channel. F(1) has five subunits: alpha(3), beta(3), gamma(1), delta(1), epsilon(1). F(0) has three main subunits: a(1), b(2) and c(10-14). The alpha and beta chains form an alternating ring which encloses part of the gamma chain. F(1) is attached to F(0) by a central stalk formed by the gamma and epsilon chains, while a peripheral stalk is formed by the delta and b chains.

It is found in the cell inner membrane. In terms of biological role, f(1)F(0) ATP synthase produces ATP from ADP in the presence of a proton or sodium gradient. F-type ATPases consist of two structural domains, F(1) containing the extramembraneous catalytic core and F(0) containing the membrane proton channel, linked together by a central stalk and a peripheral stalk. During catalysis, ATP synthesis in the catalytic domain of F(1) is coupled via a rotary mechanism of the central stalk subunits to proton translocation. Key component of the F(0) channel; it plays a direct role in translocation across the membrane. A homomeric c-ring of between 10-14 subunits forms the central stalk rotor element with the F(1) delta and epsilon subunits. The protein is ATP synthase subunit c of Aliarcobacter butzleri (strain RM4018) (Arcobacter butzleri).